Consider the following 292-residue polypeptide: Probable xyloglucan endotransglucosylase/hydrolase protein 6 (292 aa).

Residues 1–30 form the signal peptide; that stretch reads MAKIYSPSFPGTLCLCIFTLLTLMFIRVSA. The 194-residue stretch at 31 to 224 folds into the GH16 domain; it reads RPATFVEDFK…WSKAPFYAYY (194 aa). Residue Glu110 is the Nucleophile of the active site. Catalysis depends on Glu114, which acts as the Proton donor. A xyloglucan-binding site is contributed by Glu114. A glycan (N-linked (GlcNAc...) asparagine) is linked at Asn118. Xyloglucan-binding positions include 127–129, 137–139, 203–204, and Gly208; these read QTN, DRE, and DW. Disulfide bonds link Cys232/Cys240 and Cys277/Cys290. Arg282 contacts xyloglucan.

This sequence belongs to the glycosyl hydrolase 16 family. XTH group 1 subfamily. In terms of processing, contains at least one intrachain disulfide bond essential for its enzymatic activity.

It is found in the secreted. It localises to the cell wall. Its subcellular location is the extracellular space. The protein localises to the apoplast. The catalysed reaction is breaks a beta-(1-&gt;4) bond in the backbone of a xyloglucan and transfers the xyloglucanyl segment on to O-4 of the non-reducing terminal glucose residue of an acceptor, which can be a xyloglucan or an oligosaccharide of xyloglucan.. In terms of biological role, catalyzes xyloglucan endohydrolysis (XEH) and/or endotransglycosylation (XET). Cleaves and religates xyloglucan polymers, an essential constituent of the primary cell wall, and thereby participates in cell wall construction of growing tissues. In Arabidopsis thaliana (Mouse-ear cress), this protein is Probable xyloglucan endotransglucosylase/hydrolase protein 6 (XTH6).